The sequence spans 910 residues: DNA mismatch repair protein MutS (910 aa).

Residues 1 to 15 are compositionally biased toward polar residues; the sequence is MPRSAAQSEEQTLQG. A disordered region spans residues 1-94; the sequence is MPRSAAQSEE…EPAWAHHSQV (94 aa). The span at 44-54 shows a compositional bias: low complexity; that stretch reads DASLSADAAAR. 726–733 serves as a coordination point for ATP; sequence GPNASGKS.

The protein belongs to the DNA mismatch repair MutS family.

Its function is as follows. This protein is involved in the repair of mismatches in DNA. It is possible that it carries out the mismatch recognition step. This protein has a weak ATPase activity. The sequence is that of DNA mismatch repair protein MutS from Synechococcus sp. (strain WH7803).